Reading from the N-terminus, the 189-residue chain is Chitin synthase 1 (189 aa).

It belongs to the chitin synthase family. Class I subfamily.

It is found in the cell membrane. The catalysed reaction is [(1-&gt;4)-N-acetyl-beta-D-glucosaminyl](n) + UDP-N-acetyl-alpha-D-glucosamine = [(1-&gt;4)-N-acetyl-beta-D-glucosaminyl](n+1) + UDP + H(+). Its function is as follows. Polymerizes chitin, a structural polymer of the cell wall and septum, by transferring the sugar moiety of UDP-GlcNAc to the non-reducing end of the growing chitin polymer. The polypeptide is Chitin synthase 1 (chs1) (Aspergillus niger).